We begin with the raw amino-acid sequence, 568 residues long: DEAD-box ATP-dependent RNA helicase 51 (568 aa).

Basic and acidic residues-rich tracts occupy residues 1–13 (MVESDKSSVEELK) and 23–47 (KKNEQQKAEEKTHTVEENADETQKK). The interval 1-70 (MVESDKSSVE…EEEEKVEAME (70 aa)) is disordered. Residues 13 to 78 (KKRVRKRSRG…MEDGEDEKNI (66 aa)) are a coiled coil. Residues 60-70 (EEEEEKVEAME) are compositionally biased toward acidic residues. Positions 89–117 (VTFDSLDLSEQTSIAIKEMGFQYMTQIQA) match the Q motif motif. The Helicase ATP-binding domain occupies 120 to 295 (IQPLLEGKDV…RVSLTSPVHV (176 aa)). 133 to 140 (ARTGSGKT) contacts ATP. Residues 243–246 (DEAD) carry the DEAD box motif. Residues 321 to 468 (RLILLISFLK…ELEFNEKRLS (148 aa)) form the Helicase C-terminal domain. The interval 540-568 (KVRKARKQQGRNGFSPYSPYGKSTPTKEA) is disordered.

It belongs to the DEAD box helicase family. DDX18/HAS1 subfamily.

The enzyme catalyses ATP + H2O = ADP + phosphate + H(+). This Arabidopsis thaliana (Mouse-ear cress) protein is DEAD-box ATP-dependent RNA helicase 51 (RH51).